A 334-amino-acid chain; its full sequence is Methylthioribose-1-phosphate isomerase (334 aa).

Residues 44–46 (RGA), arginine 87, and glutamine 192 contribute to the substrate site. The active-site Proton donor is aspartate 233. 243 to 244 (NK) is a binding site for substrate.

This sequence belongs to the eIF-2B alpha/beta/delta subunits family. MtnA subfamily.

The catalysed reaction is 5-(methylsulfanyl)-alpha-D-ribose 1-phosphate = 5-(methylsulfanyl)-D-ribulose 1-phosphate. The protein operates within amino-acid biosynthesis; L-methionine biosynthesis via salvage pathway; L-methionine from S-methyl-5-thio-alpha-D-ribose 1-phosphate: step 1/6. Functionally, catalyzes the interconversion of methylthioribose-1-phosphate (MTR-1-P) into methylthioribulose-1-phosphate (MTRu-1-P). In Dehalococcoides mccartyi (strain ATCC BAA-2266 / KCTC 15142 / 195) (Dehalococcoides ethenogenes (strain 195)), this protein is Methylthioribose-1-phosphate isomerase.